A 466-amino-acid polypeptide reads, in one-letter code: Purple acid phosphatase 6 (466 aa).

Positions 1–20 are cleaved as a signal peptide; the sequence is MKNLVIFAFLFLSITTVING. The N-linked (GlcNAc...) asparagine glycan is linked to Asn88. A Fe cation-binding site is contributed by Asp164. A glycan (N-linked (GlcNAc...) asparagine) is linked at Asn172. Positions 192 and 195 each coordinate Fe cation. Asp192 is a Zn(2+) binding site. Residues Asn229 and His314 each contribute to the Zn(2+) site. Asn229 serves as a coordination point for substrate. The active-site Proton donor is the His324. His351 is a binding site for Zn(2+). 351–353 serves as a coordination point for substrate; the sequence is HVH. Position 353 (His353) interacts with Fe cation. N-linked (GlcNAc...) asparagine glycosylation is found at Asn367 and Asn424.

This sequence belongs to the metallophosphoesterase superfamily. Purple acid phosphatase family. In terms of assembly, homodimer. The cofactor is Fe cation. It depends on Zn(2+) as a cofactor. Specifically expressed in flowers.

Its subcellular location is the secreted. The enzyme catalyses a phosphate monoester + H2O = an alcohol + phosphate. The chain is Purple acid phosphatase 6 (PAP6) from Arabidopsis thaliana (Mouse-ear cress).